We begin with the raw amino-acid sequence, 213 residues long: Orotate phosphoribosyltransferase (213 aa).

A 5-phospho-alpha-D-ribose 1-diphosphate-binding site is contributed by Lys-26. Residue 34–35 participates in orotate binding; sequence FF. Residues 72 to 73, Arg-99, Lys-100, Lys-103, His-105, and 124 to 132 contribute to the 5-phospho-alpha-D-ribose 1-diphosphate site; these read YK and DDVITAGTA. The orotate site is built by Thr-128 and Arg-156.

It belongs to the purine/pyrimidine phosphoribosyltransferase family. PyrE subfamily. Homodimer. Requires Mg(2+) as cofactor.

It catalyses the reaction orotidine 5'-phosphate + diphosphate = orotate + 5-phospho-alpha-D-ribose 1-diphosphate. The protein operates within pyrimidine metabolism; UMP biosynthesis via de novo pathway; UMP from orotate: step 1/2. Catalyzes the transfer of a ribosyl phosphate group from 5-phosphoribose 1-diphosphate to orotate, leading to the formation of orotidine monophosphate (OMP). The chain is Orotate phosphoribosyltransferase from Pseudomonas aeruginosa (strain UCBPP-PA14).